Consider the following 105-residue polypeptide: uncharacterized protein (105 aa).

Residues 22-105 (GSAGHGATEA…KKRIIKGKVM (84 aa)) form a disordered region. Residues 61-83 (HDSRPARGDARKRHCQENNKTDR) are compositionally biased toward basic and acidic residues. The segment covering 93–105 (NRRKKRIIKGKVM) has biased composition (basic residues).

This is an uncharacterized protein from Escherichia coli (strain K12).